The following is a 150-amino-acid chain: Urease accessory protein UreE (150 aa).

Belongs to the UreE family.

The protein localises to the cytoplasm. Functionally, involved in urease metallocenter assembly. Binds nickel. Probably functions as a nickel donor during metallocenter assembly. In Staphylococcus saprophyticus subsp. saprophyticus (strain ATCC 15305 / DSM 20229 / NCIMB 8711 / NCTC 7292 / S-41), this protein is Urease accessory protein UreE.